The sequence spans 322 residues: Adenine deaminase (322 aa).

3 residues coordinate Zn(2+): histidine 11, histidine 13, and histidine 189. Glutamate 192 acts as the Proton donor in catalysis. Residue aspartate 270 participates in Zn(2+) binding. Residue aspartate 271 coordinates substrate.

It belongs to the metallo-dependent hydrolases superfamily. Adenosine and AMP deaminases family. Adenine deaminase type 2 subfamily. It depends on Zn(2+) as a cofactor.

It carries out the reaction adenine + H2O + H(+) = hypoxanthine + NH4(+). Its function is as follows. Catalyzes the hydrolytic deamination of adenine to hypoxanthine. Plays an important role in the purine salvage pathway and in nitrogen catabolism. In Rhizobium johnstonii (strain DSM 114642 / LMG 32736 / 3841) (Rhizobium leguminosarum bv. viciae), this protein is Adenine deaminase.